The sequence spans 416 residues: PRKCA-binding protein (416 aa).

The PDZ domain maps to 22–105; sequence KVTLQKDAQN…EVTIHYNKLQ (84 aa). Residues Cys-44 and Cys-46 each coordinate Zn(2+). Thr-82 is modified (phosphothreonine). Residues 144 to 357 form the AH domain; the sequence is LCNDGLVKRL…CYAVLQDADV (214 aa). The tract at residues 373–416 is disordered; the sequence is PNQGSFTDGEEEDEEEEDGAAREVSKDACGATGPTDKGGSWCDS. Positions 380 to 390 are enriched in acidic residues; the sequence is DGEEEDEEEED. Residue Cys-414 is the site of S-palmitoyl cysteine; by DHHC8 attachment.

In terms of assembly, monomer and homodimer. Interacts with CXADR. Interacts presynaptically with the glutamate receptors GRIA2, GRIA3, GRIK3, isoform 3 of GRIA4, isoform A of GRM4, GRM7 and GRM8; with NAPA and NAPB; and with BTG2. The interaction with NAPA and NAPB disrupts the interaction with GRIA2, conducting to the internalization of GRIA2. Interacts with PRKCA; with the amine transporters SLC6A2 and SLC6A3; with the channels ASIC1 and ASIC2; with the GTP-binding proteins ARF1 and ARF3; with the ephrin receptor tyrosine kinases EPHA7, EPHB1 and EPHB2; with ERBB2 and through its PDZ domain with the C-terminal tail of PRLHR. Interacts with UNC5A. Interacts (via AH domain) with NCS1/FREQ; in a calcium-dependent manner. Interacts with F-actin and associates with the ARP2/3 complex. Interacts (via PDZ domain) with ARF1 (activated); the interaction blocks Arp2/3 complex inhibition. Interacts with SORCS3. In terms of processing, phosphorylation at Thr-82 appears to inhibit the interaction with AMPA receptors. Phosphorylated on tyrosine residues by EPHB2 and on serine or threonine residues by PKC. Post-translationally, palmitoylation on Cys-414 is essential for long-term synaptic depression (LTD). In terms of tissue distribution, expressed in all tissues examined, with highest levels in brain and testes and lowest levels in lung.

The protein resides in the cytoplasm. Its subcellular location is the perinuclear region. It localises to the membrane. It is found in the postsynaptic density. The protein localises to the synapse. The protein resides in the synaptosome. Its subcellular location is the cytoskeleton. Probable adapter protein that bind to and organize the subcellular localization of a variety of membrane proteins containing some PDZ recognition sequence. Involved in the clustering of various receptors, possibly by acting at the receptor internalization level. Plays a role in synaptic plasticity by regulating the trafficking and internalization of AMPA receptors. May be regulated upon PRKCA activation. May regulate ASIC1/ASIC3 channel. Regulates actin polymerization by inhibiting the actin-nucleating activity of the Arp2/3 complex; the function is competitive with nucleation promoting factors and is linked to neuronal morphology regulation and AMPA receptor (AMPAR) endocytosis. Via interaction with the Arp2/3 complex involved in regulation of synaptic plasicity of excitatory synapses and required for spine shrinkage during long-term depression (LTD). Involved in regulation of astrocyte morphology, antagonistic to Arp2/3 complex activator WASL/N-WASP function. In Mus musculus (Mouse), this protein is PRKCA-binding protein (Pick1).